An 885-amino-acid polypeptide reads, in one-letter code: MSGSLNSRWVVQVSLTIINIIGFLVFLRGFFPSKVVLPGFNSFQDSTKSPFSDQYGNPQFNKFILMVVDAMRSDFCFSDRSNFSFLHQLINQGRALPFTAFSNPPTVTLPRLKGITTGGTPNFLDAILNVADDQDDSQGLHNQDSWVHQFRHSNNKTINFFGDDTWLKLFQDQFTEFEGTNSFFVSDFTEVDNNVTRHLDDQLSSNKWDGLILHYLGLDHIGHKGGPESPYMKPKQIEMDKILQRLYTYVTKNDDTLIVLMGDHGMNEIGNHGGSSPGETSAALSFISPKFNHKGESPLPYNSDYSYHHKISQIDLVPTLAALLNFPIPKNSLGVIAKEILEIWPENQRIKILLENCAQIMNLYEAKYGPSGKVWSQWENLQAKQHPIADYYEFLQDIQSEMASSATNYGYKDIYAGALILVITALAVIVVFNRYFLTASNMNISSVMFYELFVVLYSLHFHGSSLIEEEHQIWYFFTTATLLFLAITFFDTFKSLQNFISFGVLFACIRFMRSWNNSGQKYSSQYNIAYYLSHSNPNLMWGLIILTYFVLTLCIYIQGSLVPTFAFSFGKRLPDVKDPGGLISFIVVFVATSVSFSFKLLQYYIDGNTIPKWLNRFLLWIIESHHIDLSSATLEDNELKFQLQSVSIQLSKFTTIILLLLVISRVIIGKIRKIRYGTITDITNIMTIYLIHQTRHENIPIFLALMFAKFALSKLIYRKTNRIDQYILTVTMTVLCLQNLTFFCMGNTNSLATVDLSNAYNGVKAYNVFLVGLLTFVSNFAGPIFWSLSGLQLLYEPSLLNFNGPATTDLLHYTGLKKSILLVKSLISLFFYTVSAVNLVGSCINLRFHLFIWTVFSPKLLFFGSWILFVNVLIDLILAVIVLLF.

N-linked (GlcNAc...) asparagine glycosylation is found at Asn-82, Asn-155, and Asn-194. Residues 413 to 433 form a helical membrane-spanning segment; that stretch reads DIYAGALILVITALAVIVVFN. Asn-443 is a glycosylation site (N-linked (GlcNAc...) asparagine). Transmembrane regions (helical) follow at residues 447–467, 473–493, and 495–514; these read VMFYELFVVLYSLHFHGSSLI, IWYFFTTATLLFLAITFFDTF, and SLQNFISFGVLFACIRFMRS. An N-linked (GlcNAc...) asparagine glycan is attached at Asn-516. The next 8 helical transmembrane spans lie at 539–559, 581–601, 648–668, 697–717, 726–746, 768–788, 820–840, and 865–885; these read LMWGLIILTYFVLTLCIYIQG, GLISFIVVFVATSVSFSFKLL, IQLSKFTTIILLLLVISRVII, ENIPIFLALMFAKFALSKLIY, YILTVTMTVLCLQNLTFFCMG, VFLVGLLTFVSNFAGPIFWSL, ILLVKSLISLFFYTVSAVNLV, and SWILFVNVLIDLILAVIVLLF.

It belongs to the PIGG/PIGN/PIGO family. PIGG subfamily.

It is found in the endoplasmic reticulum membrane. It participates in glycolipid biosynthesis; glycosylphosphatidylinositol-anchor biosynthesis. Functionally, ethanolamine phosphate transferase involved in glycosylphosphatidylinositol-anchor biosynthesis. Transfers ethanolamine phosphate to the GPI second mannose. This is GPI ethanolamine phosphate transferase 2 (GPI7) from Candida albicans (strain SC5314 / ATCC MYA-2876) (Yeast).